Consider the following 63-residue polypeptide: Bowman-birk type proteinase inhibitor 2 (63 aa).

7 disulfide bridges follow: cysteine 7/cysteine 61, cysteine 8/cysteine 23, cysteine 11/cysteine 57, cysteine 13/cysteine 21, cysteine 31/cysteine 38, cysteine 35/cysteine 50, and cysteine 40/cysteine 48.

It belongs to the Bowman-Birk serine protease inhibitor family. As to quaternary structure, exists as a dimer in its native form.

Its function is as follows. Inhibits trypsin, chymotrypsin, plasmin and factor XIIa. Does not inhibit factor Xa, thrombin, human plasma kallikrein, porcine pancreatic kallikrein and human urinary kallikrein. The chain is Bowman-birk type proteinase inhibitor 2 from Amburana cearensis (Cerejeira).